A 171-amino-acid chain; its full sequence is Nicotinamide-nucleotide adenylyltransferase (171 aa).

It belongs to the archaeal NMN adenylyltransferase family.

Its subcellular location is the cytoplasm. It carries out the reaction beta-nicotinamide D-ribonucleotide + ATP + H(+) = diphosphate + NAD(+). It functions in the pathway cofactor biosynthesis; NAD(+) biosynthesis; NAD(+) from nicotinamide D-ribonucleotide: step 1/1. This is Nicotinamide-nucleotide adenylyltransferase from Methanococcus maripaludis (strain C6 / ATCC BAA-1332).